Here is a 212-residue protein sequence, read N- to C-terminus: Thymidylate kinase (212 aa).

13–20 (GLEGAGKS) is an ATP binding site.

It belongs to the thymidylate kinase family.

It catalyses the reaction dTMP + ATP = dTDP + ADP. Phosphorylation of dTMP to form dTDP in both de novo and salvage pathways of dTTP synthesis. The protein is Thymidylate kinase of Legionella pneumophila (strain Corby).